We begin with the raw amino-acid sequence, 596 residues long: Fc receptor-like protein 5 (596 aa).

An N-terminal signal peptide occupies residues methionine 1–glycine 26. Topologically, residues glutamine 27–alanine 496 are extracellular. Ig-like C2-type domains follow at residues serine 34–serine 115, proline 106–valine 199, proline 207–isoleucine 294, proline 296–serine 384, and proline 398–serine 483. 3 disulfide bridges follow: cysteine 55/cysteine 99, cysteine 137/cysteine 181, and cysteine 228/cysteine 277. N-linked (GlcNAc...) asparagine glycosylation is present at asparagine 324. Intrachain disulfides connect cysteine 325/cysteine 373 and cysteine 419/cysteine 466. The N-linked (GlcNAc...) asparagine glycan is linked to asparagine 436. A helical membrane pass occupies residues alanine 497–phenylalanine 517. Topologically, residues serine 518–lysine 596 are cytoplasmic. 2 disordered regions span residues glycine 522–tyrosine 544 and glutamate 561–lysine 596. Positions lysine 577–lysine 596 are enriched in basic and acidic residues.

In terms of assembly, interacts with CR2. Interacts with CD19. In terms of processing, phosphorylated on cytoplasmic tyrosines; required for interaction with protein tyrosine phosphatases and protein tyrosine kinases. In terms of tissue distribution, preferentially expressed in marginal zone B cells.

The protein resides in the cell membrane. Functionally, plays an important role in B-cell response to antigen that acts both as a negative or positive coreceptor. Inhibits B-cell receptor (BCR) signaling in the absence of CR2 stimulation but engagement with CR2 and the BCR lead to a superior calcium response compared to CR2 and BCR costimulation. May be involved in B-cell development and differentiation in peripheral lymphoid organs and may be useful markers of B-cell stages. May have an immunoregulatory role in marginal zone B-cells. May play a role in fertilization. The polypeptide is Fc receptor-like protein 5 (Fcrl5) (Mus musculus (Mouse)).